The primary structure comprises 180 residues: Acireductone dioxygenase (180 aa).

Fe(2+)-binding residues include His-97, His-99, Glu-103, and His-141. 4 residues coordinate Ni(2+): His-97, His-99, Glu-103, and His-141.

The protein belongs to the acireductone dioxygenase (ARD) family. Monomer. Requires Fe(2+) as cofactor. It depends on Ni(2+) as a cofactor.

It catalyses the reaction 1,2-dihydroxy-5-(methylsulfanyl)pent-1-en-3-one + O2 = 3-(methylsulfanyl)propanoate + CO + formate + 2 H(+). It carries out the reaction 1,2-dihydroxy-5-(methylsulfanyl)pent-1-en-3-one + O2 = 4-methylsulfanyl-2-oxobutanoate + formate + 2 H(+). It participates in amino-acid biosynthesis; L-methionine biosynthesis via salvage pathway; L-methionine from S-methyl-5-thio-alpha-D-ribose 1-phosphate: step 5/6. Its function is as follows. Catalyzes 2 different reactions between oxygen and the acireductone 1,2-dihydroxy-3-keto-5-methylthiopentene (DHK-MTPene) depending upon the metal bound in the active site. Fe-containing acireductone dioxygenase (Fe-ARD) produces formate and 2-keto-4-methylthiobutyrate (KMTB), the alpha-ketoacid precursor of methionine in the methionine recycle pathway. Ni-containing acireductone dioxygenase (Ni-ARD) produces methylthiopropionate, carbon monoxide and formate, and does not lie on the methionine recycle pathway. The polypeptide is Acireductone dioxygenase (Serratia proteamaculans (strain 568)).